The sequence spans 642 residues: 1-deoxy-D-xylulose-5-phosphate synthase 2 (642 aa).

Residues His79 and 120-122 (AHS) contribute to the thiamine diphosphate site. Asp155 contributes to the Mg(2+) binding site. Thiamine diphosphate-binding positions include 156–157 (GS), Asn184, Tyr293, and Glu375. Asn184 contributes to the Mg(2+) binding site.

Belongs to the transketolase family. DXPS subfamily. As to quaternary structure, homodimer. Mg(2+) serves as cofactor. The cofactor is thiamine diphosphate.

The catalysed reaction is D-glyceraldehyde 3-phosphate + pyruvate + H(+) = 1-deoxy-D-xylulose 5-phosphate + CO2. It participates in metabolic intermediate biosynthesis; 1-deoxy-D-xylulose 5-phosphate biosynthesis; 1-deoxy-D-xylulose 5-phosphate from D-glyceraldehyde 3-phosphate and pyruvate: step 1/1. Functionally, catalyzes the acyloin condensation reaction between C atoms 2 and 3 of pyruvate and glyceraldehyde 3-phosphate to yield 1-deoxy-D-xylulose-5-phosphate (DXP). The polypeptide is 1-deoxy-D-xylulose-5-phosphate synthase 2 (Roseobacter denitrificans (strain ATCC 33942 / OCh 114) (Erythrobacter sp. (strain OCh 114))).